Here is a 371-residue protein sequence, read N- to C-terminus: Queuine tRNA-ribosyltransferase (371 aa).

Catalysis depends on aspartate 90, which acts as the Proton acceptor. Residues 90-94 (DSGGF), aspartate 144, glutamine 189, and glycine 215 contribute to the substrate site. An RNA binding region spans residues 246–252 (GVGTPEN). The active-site Nucleophile is aspartate 265. Residues 270 to 274 (TRNAR) are RNA binding; important for wobble base 34 recognition. Residues cysteine 303, cysteine 305, cysteine 308, and histidine 334 each coordinate Zn(2+).

The protein belongs to the queuine tRNA-ribosyltransferase family. As to quaternary structure, homodimer. Within each dimer, one monomer is responsible for RNA recognition and catalysis, while the other monomer binds to the replacement base PreQ1. Zn(2+) serves as cofactor.

It catalyses the reaction 7-aminomethyl-7-carbaguanine + guanosine(34) in tRNA = 7-aminomethyl-7-carbaguanosine(34) in tRNA + guanine. Its pathway is tRNA modification; tRNA-queuosine biosynthesis. Its function is as follows. Catalyzes the base-exchange of a guanine (G) residue with the queuine precursor 7-aminomethyl-7-deazaguanine (PreQ1) at position 34 (anticodon wobble position) in tRNAs with GU(N) anticodons (tRNA-Asp, -Asn, -His and -Tyr). Catalysis occurs through a double-displacement mechanism. The nucleophile active site attacks the C1' of nucleotide 34 to detach the guanine base from the RNA, forming a covalent enzyme-RNA intermediate. The proton acceptor active site deprotonates the incoming PreQ1, allowing a nucleophilic attack on the C1' of the ribose to form the product. After dissociation, two additional enzymatic reactions on the tRNA convert PreQ1 to queuine (Q), resulting in the hypermodified nucleoside queuosine (7-(((4,5-cis-dihydroxy-2-cyclopenten-1-yl)amino)methyl)-7-deazaguanosine). The protein is Queuine tRNA-ribosyltransferase of Helicobacter pylori (strain J99 / ATCC 700824) (Campylobacter pylori J99).